A 249-amino-acid chain; its full sequence is Isoamyl acetate-hydrolyzing esterase 1 homolog (249 aa).

S24 acts as the Nucleophile in catalysis. K63 is subject to N6-succinyllysine. The active-site Proton donor is the D197. Catalysis depends on H200, which acts as the Proton acceptor.

Belongs to the 'GDSL' lipolytic enzyme family. IAH1 subfamily.

Probable lipase. In Mus musculus (Mouse), this protein is Isoamyl acetate-hydrolyzing esterase 1 homolog (Iah1).